The following is a 193-amino-acid chain: MASLYFTYSAMNAGKSTSLLQVAHNYEERQQHVLLMTPALDDRAGKGRIASRLGIGRDAVSFTHRTDLAAVVRARYMQQAIDCVLIDEAQFLSEEQVWQLSSLADTDNIPVMCYGIRTDAFGNAFPGSAVLLAIADKLVEMKTICHCGRKATMSLRVDEQGNAIRMGQQIAIGGNDRYVSCCRKHWKEAMGLR.

ATP contacts are provided by residues 9–16 (SAMNAGKS) and 87–90 (DEAQ). Glutamate 88 (proton acceptor) is an active-site residue. 4 residues coordinate Zn(2+): cysteine 145, cysteine 147, cysteine 182, and histidine 185.

It belongs to the thymidine kinase family. In terms of assembly, homotetramer.

The protein resides in the cytoplasm. It catalyses the reaction thymidine + ATP = dTMP + ADP + H(+). In Idiomarina loihiensis (strain ATCC BAA-735 / DSM 15497 / L2-TR), this protein is Thymidine kinase.